Consider the following 106-residue polypeptide: Iron-sulfur cluster assembly protein CyaY (106 aa).

It belongs to the frataxin family.

Its function is as follows. Involved in iron-sulfur (Fe-S) cluster assembly. May act as a regulator of Fe-S biogenesis. The sequence is that of Iron-sulfur cluster assembly protein CyaY from Salmonella paratyphi B (strain ATCC BAA-1250 / SPB7).